A 287-amino-acid polypeptide reads, in one-letter code: tRNA pseudouridine synthase B (287 aa).

Asp-38 serves as the catalytic Nucleophile.

This sequence belongs to the pseudouridine synthase TruB family. Type 1 subfamily.

It catalyses the reaction uridine(55) in tRNA = pseudouridine(55) in tRNA. Responsible for synthesis of pseudouridine from uracil-55 in the psi GC loop of transfer RNAs. In Mycoplasma mobile (strain ATCC 43663 / 163K / NCTC 11711) (Mesomycoplasma mobile), this protein is tRNA pseudouridine synthase B.